Consider the following 192-residue polypeptide: Probable GTP-binding protein EngB (192 aa).

Residues 22-192 (GRPEIVFVGR…LLASIDTFTQ (171 aa)) form the EngB-type G domain. Residues 30–37 (GRSNVGKS), 57–61 (GKTRL), 75–78 (DLPG), 142–145 (TKWD), and 172–174 (YSS) each bind GTP. Positions 37 and 59 each coordinate Mg(2+).

Belongs to the TRAFAC class TrmE-Era-EngA-EngB-Septin-like GTPase superfamily. EngB GTPase family. Requires Mg(2+) as cofactor.

Functionally, necessary for normal cell division and for the maintenance of normal septation. The polypeptide is Probable GTP-binding protein EngB (Chlorobaculum tepidum (strain ATCC 49652 / DSM 12025 / NBRC 103806 / TLS) (Chlorobium tepidum)).